The following is an 81-amino-acid chain: LYR motif-containing protein At3g19508 (81 aa).

The protein belongs to the complex I LYR family. LYRM9 subfamily.

This chain is LYR motif-containing protein At3g19508, found in Arabidopsis thaliana (Mouse-ear cress).